A 243-amino-acid polypeptide reads, in one-letter code: ATP synthase subunit b, mitochondrial (243 aa).

Belongs to the eukaryotic ATPase B chain family. In terms of assembly, F-type ATPases have 2 components, CF(1) - the catalytic core - and CF(0) - the membrane proton channel. CF(1) has five subunits: alpha(3), beta(3), gamma(1), delta(1), epsilon(1). CF(0) has three main subunits: a, b and c.

Its subcellular location is the mitochondrion. It localises to the mitochondrion inner membrane. Mitochondrial membrane ATP synthase (F(1)F(0) ATP synthase or Complex V) produces ATP from ADP in the presence of a proton gradient across the membrane which is generated by electron transport complexes of the respiratory chain. F-type ATPases consist of two structural domains, F(1) - containing the extramembraneous catalytic core, and F(0) - containing the membrane proton channel, linked together by a central stalk and a peripheral stalk. During catalysis, ATP synthesis in the catalytic domain of F(1) is coupled via a rotary mechanism of the central stalk subunits to proton translocation. Part of the complex F(0) domain and the peripheric stalk, which acts as a stator to hold the catalytic alpha(3)beta(3) subcomplex and subunit a/ATP6 static relative to the rotary elements. The protein is ATP synthase subunit b, mitochondrial of Drosophila melanogaster (Fruit fly).